The following is a 413-amino-acid chain: Multidrug resistance protein MdtA (413 aa).

The N-terminal stretch at 1 to 20 (MKGSNTFRWAIAIGVVVAAA) is a signal peptide. 2 disordered regions span residues 31 to 57 (SPTA…RDGP) and 391 to 413 (EPQT…GARA). Residues 397 to 413 (ADEKSPSRHEGQKGARA) show a composition bias toward basic and acidic residues.

It belongs to the membrane fusion protein (MFP) (TC 8.A.1) family. As to quaternary structure, part of a tripartite efflux system composed of MdtA, MdtB and MdtC.

The protein resides in the cell inner membrane. The chain is Multidrug resistance protein MdtA from Salmonella typhimurium (strain LT2 / SGSC1412 / ATCC 700720).